The chain runs to 209 residues: Large ribosomal subunit protein uL3 (209 aa).

The segment at 113 to 155 (TSRGHGYQGNIKRHHQSRGPETHGSRYHRIPGSMGSIINRVPK) is disordered.

Belongs to the universal ribosomal protein uL3 family. As to quaternary structure, part of the 50S ribosomal subunit. Forms a cluster with proteins L14 and L19.

One of the primary rRNA binding proteins, it binds directly near the 3'-end of the 23S rRNA, where it nucleates assembly of the 50S subunit. The chain is Large ribosomal subunit protein uL3 from Lactobacillus delbrueckii subsp. bulgaricus (strain ATCC 11842 / DSM 20081 / BCRC 10696 / JCM 1002 / NBRC 13953 / NCIMB 11778 / NCTC 12712 / WDCM 00102 / Lb 14).